The following is a 555-amino-acid chain: Putative protein NRT1/ PTR FAMILY 2.14 (555 aa).

The next 12 membrane-spanning stretches (helical) occupy residues V62–I82, I93–V113, Y135–I155, F181–L201, W209–V229, Y234–A254, I319–M339, L363–F383, L405–V425, V441–G461, S480–V500, and C523–A543.

It belongs to the major facilitator superfamily. Proton-dependent oligopeptide transporter (POT/PTR) (TC 2.A.17) family. In terms of tissue distribution, not detected.

It localises to the membrane. The protein is Putative protein NRT1/ PTR FAMILY 2.14 (NPF2.14) of Arabidopsis thaliana (Mouse-ear cress).